The chain runs to 109 residues: Putative pterin-4-alpha-carbinolamine dehydratase (109 aa).

This sequence belongs to the pterin-4-alpha-carbinolamine dehydratase family.

The catalysed reaction is (4aS,6R)-4a-hydroxy-L-erythro-5,6,7,8-tetrahydrobiopterin = (6R)-L-erythro-6,7-dihydrobiopterin + H2O. In Rickettsia canadensis (strain McKiel), this protein is Putative pterin-4-alpha-carbinolamine dehydratase.